The chain runs to 266 residues: Diphthine synthase (266 aa).

Residues L9, D84, V87, 112-113, L169, A210, and H235 contribute to the S-adenosyl-L-methionine site; that span reads SI.

It belongs to the diphthine synthase family. In terms of assembly, homodimer.

The catalysed reaction is 2-[(3S)-amino-3-carboxypropyl]-L-histidyl-[translation elongation factor 2] + 3 S-adenosyl-L-methionine = diphthine-[translation elongation factor 2] + 3 S-adenosyl-L-homocysteine + 3 H(+). It functions in the pathway protein modification; peptidyl-diphthamide biosynthesis. Functionally, S-adenosyl-L-methionine-dependent methyltransferase that catalyzes the trimethylation of the amino group of the modified target histidine residue in translation elongation factor 2 (EF-2), to form an intermediate called diphthine. The three successive methylation reactions represent the second step of diphthamide biosynthesis. In Methanosarcina mazei (strain ATCC BAA-159 / DSM 3647 / Goe1 / Go1 / JCM 11833 / OCM 88) (Methanosarcina frisia), this protein is Diphthine synthase.